The following is a 352-amino-acid chain: Uroporphyrinogen decarboxylase (352 aa).

Substrate contacts are provided by residues 29 to 33, Phe48, Asp78, Tyr154, Ser209, and His322; that span reads RQAGR.

Belongs to the uroporphyrinogen decarboxylase family. In terms of assembly, homodimer.

It is found in the cytoplasm. It catalyses the reaction uroporphyrinogen III + 4 H(+) = coproporphyrinogen III + 4 CO2. It participates in porphyrin-containing compound metabolism; protoporphyrin-IX biosynthesis; coproporphyrinogen-III from 5-aminolevulinate: step 4/4. In terms of biological role, catalyzes the decarboxylation of four acetate groups of uroporphyrinogen-III to yield coproporphyrinogen-III. This is Uroporphyrinogen decarboxylase from Bacillus pumilus (strain SAFR-032).